The sequence spans 392 residues: Succinate--CoA ligase [ADP-forming] subunit beta (392 aa).

In terms of domain architecture, ATP-grasp spans 9–248 (KDILRKFGVA…TNEEDPFEVE (240 aa)). Residues Lys50, 57 to 59 (GRG), Glu103, Met106, and Glu111 each bind ATP. Residues Asn203 and Asp217 each coordinate Mg(2+). Residues Asn268 and 325 to 327 (GIV) contribute to the substrate site.

The protein belongs to the succinate/malate CoA ligase beta subunit family. In terms of assembly, heterotetramer of two alpha and two beta subunits. Mg(2+) serves as cofactor.

The enzyme catalyses succinate + ATP + CoA = succinyl-CoA + ADP + phosphate. It catalyses the reaction GTP + succinate + CoA = succinyl-CoA + GDP + phosphate. Its pathway is carbohydrate metabolism; tricarboxylic acid cycle; succinate from succinyl-CoA (ligase route): step 1/1. In terms of biological role, succinyl-CoA synthetase functions in the citric acid cycle (TCA), coupling the hydrolysis of succinyl-CoA to the synthesis of either ATP or GTP and thus represents the only step of substrate-level phosphorylation in the TCA. The beta subunit provides nucleotide specificity of the enzyme and binds the substrate succinate, while the binding sites for coenzyme A and phosphate are found in the alpha subunit. This is Succinate--CoA ligase [ADP-forming] subunit beta from Pelodictyon phaeoclathratiforme (strain DSM 5477 / BU-1).